Consider the following 524-residue polypeptide: Translation initiation factor eIF2B subunit delta (524 aa).

Residues 1–174 (MAAVAVAVRE…RQQVPTRKDY (174 aa)) form a disordered region. At A2 the chain carries N-acetylalanine. 2 stretches are compositionally biased toward basic and acidic residues: residues 8–20 (VREESRSEMKTEL) and 31–40 (LTQEEKLQLR). A Phosphoserine modification is found at S12. Over residues 41–51 (KEKKQQKKKRK) the composition is skewed to basic residues. A Phosphothreonine modification is found at T86. Composition is skewed to basic and acidic residues over residues 96 to 121 (SKAELRAERRAKQEAERALKQARKGE) and 161 to 174 (RKPDRQQVPTRKDY). A may bind the chemical integrated stress response (ISR) inhibitor ISRIB region spans residues 171–180 (RKDYGSKVSL).

It belongs to the eIF-2B alpha/beta/delta subunits family. Component of the translation initiation factor 2B (eIF2B) complex which is a heterodecamer of two sets of five different subunits: alpha, beta, gamma, delta and epsilon. Subunits alpha, beta and delta comprise a regulatory subcomplex and subunits epsilon and gamma comprise a catalytic subcomplex. Within the complex, the hexameric regulatory complex resides at the center, with the two heterodimeric catalytic subcomplexes bound on opposite sides.

The protein resides in the cytoplasm. The protein localises to the cytosol. Activated by the chemical integrated stress response (ISR) inhibitor ISRIB which stimulates guanine nucleotide exchange factor activity for both phosphorylated and unphosphorylated eIF2. Acts as a component of the translation initiation factor 2B (eIF2B) complex, which catalyzes the exchange of GDP for GTP on eukaryotic initiation factor 2 (eIF2) gamma subunit. Its guanine nucleotide exchange factor activity is repressed when bound to eIF2 complex phosphorylated on the alpha subunit, thereby limiting the amount of methionyl-initiator methionine tRNA available to the ribosome and consequently global translation is repressed. The polypeptide is Translation initiation factor eIF2B subunit delta (Eif2b4) (Rattus norvegicus (Rat)).